Reading from the N-terminus, the 500-residue chain is Glycerol kinase (500 aa).

Thr-14 contacts ADP. Residues Thr-14, Thr-15, and Ser-16 each contribute to the ATP site. Thr-14 is a sn-glycerol 3-phosphate binding site. Arg-18 is a binding site for ADP. Residues Arg-84, Glu-85, and Tyr-136 each contribute to the sn-glycerol 3-phosphate site. The glycerol site is built by Arg-84, Glu-85, and Tyr-136. Residue His-232 is modified to Phosphohistidine; by HPr. A sn-glycerol 3-phosphate-binding site is contributed by Asp-246. The glycerol site is built by Asp-246 and Gln-247. Positions 268 and 311 each coordinate ADP. ATP is bound by residues Thr-268, Gly-311, Gln-315, and Gly-412. Positions 412 and 416 each coordinate ADP.

Belongs to the FGGY kinase family. Homotetramer and homodimer (in equilibrium). The phosphoenolpyruvate-dependent sugar phosphotransferase system (PTS), including enzyme I, and histidine-containing protein (HPr) are required for the phosphorylation, which leads to the activation of the enzyme.

The enzyme catalyses glycerol + ATP = sn-glycerol 3-phosphate + ADP + H(+). Its pathway is polyol metabolism; glycerol degradation via glycerol kinase pathway; sn-glycerol 3-phosphate from glycerol: step 1/1. Activated by phosphorylation and inhibited by fructose 1,6-bisphosphate (FBP). Key enzyme in the regulation of glycerol uptake and metabolism. Catalyzes the phosphorylation of glycerol to yield sn-glycerol 3-phosphate. This chain is Glycerol kinase, found in Streptococcus uberis (strain ATCC BAA-854 / 0140J).